The sequence spans 174 residues: Urease accessory protein UreE (174 aa).

The disordered stretch occupies residues 146–174 (NGAYATGGHAHDHDGEPEHVHGPGCQHAH). Residues 154–166 (HAHDHDGEPEHVH) are compositionally biased toward basic and acidic residues.

The protein belongs to the UreE family.

The protein localises to the cytoplasm. Functionally, involved in urease metallocenter assembly. Binds nickel. Probably functions as a nickel donor during metallocenter assembly. This chain is Urease accessory protein UreE, found in Albidiferax ferrireducens (strain ATCC BAA-621 / DSM 15236 / T118) (Rhodoferax ferrireducens).